The chain runs to 227 residues: 7-cyano-7-deazaguanine synthase (227 aa).

9 to 19 (LSGGLDSATVL) serves as a coordination point for ATP. Cysteine 189, cysteine 199, cysteine 202, and cysteine 205 together coordinate Zn(2+).

Belongs to the QueC family. It depends on Zn(2+) as a cofactor.

The catalysed reaction is 7-carboxy-7-deazaguanine + NH4(+) + ATP = 7-cyano-7-deazaguanine + ADP + phosphate + H2O + H(+). Its pathway is purine metabolism; 7-cyano-7-deazaguanine biosynthesis. Catalyzes the ATP-dependent conversion of 7-carboxy-7-deazaguanine (CDG) to 7-cyano-7-deazaguanine (preQ(0)). The protein is 7-cyano-7-deazaguanine synthase of Cupriavidus taiwanensis (strain DSM 17343 / BCRC 17206 / CCUG 44338 / CIP 107171 / LMG 19424 / R1) (Ralstonia taiwanensis (strain LMG 19424)).